The chain runs to 276 residues: Large ribosomal subunit protein uL2c (276 aa).

Residues 225–276 (AMNPVDHPHGGGEGRTPIGRKKPVTPWGYSALGKKSRKRNRYSDASILRRRE) are disordered.

Belongs to the universal ribosomal protein uL2 family. In terms of assembly, part of the 50S ribosomal subunit.

The protein resides in the plastid. It is found in the chloroplast. In Pinus koraiensis (Korean pine), this protein is Large ribosomal subunit protein uL2c (rpl2).